The primary structure comprises 224 residues: UPF0758 protein Mmwyl1_0624 (224 aa).

Positions 102-224 constitute an MPN domain; sequence VFASAEHVRT…PVSLAERGLV (123 aa). Positions 173, 175, and 186 each coordinate Zn(2+). A JAMM motif motif is present at residues 173-186; the sequence is HNHPSGIAEPSQAD.

This sequence belongs to the UPF0758 family.

This is UPF0758 protein Mmwyl1_0624 from Marinomonas sp. (strain MWYL1).